Consider the following 3912-residue polypeptide: Ubiquitin carboxyl-terminal hydrolase puf (3912 aa).

Disordered stretches follow at residues 101–172 (AQQQ…HKSH), 518–590 (NVTA…ISPE), 660–688 (DVPS…ECSD), 851–878 (VVSG…VQPS), and 1491–1611 (SRRG…PALS). The span at 106-133 (EQQRDEASAQAEAKESSAPAEEPKKEEP) shows a compositional bias: basic and acidic residues. Residues 134–143 (SGSAGEEAQG) are compositionally biased toward low complexity. Pro residues predominate over residues 150–164 (KKPPVGPCTPPPPQT). Residues 522-532 (SSSDSGSIEGS) are compositionally biased toward low complexity. A compositionally biased stretch (basic and acidic residues) spans 576-585 (ICDPTTEKGK). Positions 660–687 (DVPSSDEADGEADGDGEGELLADSDECS) are enriched in acidic residues. The segment covering 862-876 (KASQGSSTSGSTPVQ) has biased composition (polar residues). Residues 1511-1520 (VKKSSMGRRR) show a composition bias toward basic residues. Residues 1550–1567 (TPSTGLQDVETEASSSSG) are compositionally biased toward polar residues. Basic and acidic residues predominate over residues 1583–1594 (KGETFEQEKERP). Pro residues predominate over residues 1600-1609 (PPSPTPPPPA). The 366-residue stretch at 2015 to 2380 (VGLTNLGATC…SAYMLFYERR (366 aa)) folds into the USP domain. The Nucleophile role is filled by Cys2024. The span at 2249 to 2263 (YKEERERRQKEKEGA) shows a compositional bias: basic and acidic residues. The disordered stretch occupies residues 2249 to 2274 (YKEERERRQKEKEGADGSGDGNDNEK). His2305 serves as the catalytic Proton acceptor. 4 disordered regions span residues 2391 to 2529 (ELLV…TSKA), 3322 to 3344 (QQSQ…LQQQ), 3657 to 3776 (SERF…EERE), and 3800 to 3912 (ASVP…PTQI). Basic and acidic residues-rich tracts occupy residues 2402 to 2413 (VEEKSEAEEPTK) and 2433 to 2488 (EKDK…EKPT). The segment covering 2504–2523 (NCDNHQQNNNSNSKASNDQQ) has biased composition (low complexity). Basic and acidic residues predominate over residues 3657–3703 (SERFRKESERDPFPNKKQKRDSQKIKEKEHPQPESEKETSTENDKPS). Residues 3706-3721 (SMESSGNAEQATDSTK) are compositionally biased toward polar residues. Residues 3741-3751 (SDDETELEDEL) are compositionally biased toward acidic residues. Residues 3766–3776 (TAQDRVNEERE) are compositionally biased toward basic and acidic residues. Residues 3865–3877 (PKTSQTNGSQQNE) are compositionally biased toward polar residues. Residues 3878 to 3912 (SPPAATSADTAPANPSPAPAAAVASTSQAASPTQI) show a composition bias toward low complexity.

The protein belongs to the peptidase C19 family. Interacts with Myc and ago.

Its subcellular location is the nucleus. The enzyme catalyses Thiol-dependent hydrolysis of ester, thioester, amide, peptide and isopeptide bonds formed by the C-terminal Gly of ubiquitin (a 76-residue protein attached to proteins as an intracellular targeting signal).. Ubiquitin hydrolase that can remove conjugated ubiquitin from target proteins and polyubiquitin chains. Essential for Myc-mediated cell growth and proliferation in developing eyes and wings. In the wing and eye, the deubiquitinating activity acts as an antagonist to the SCF E3 ubiquitin-protein ligase member archipelago (ago) to regulate Myc and CycE stability and thus control cell growth and proliferation. Also appears to regulate ago by modulating its induction by Myc. May also promote cell apoptosis in the wing imaginal disk, acting in an apoptotic pathway that appears to be largely independent of Myc. Required for preventing the activation of the immune deficiency (Imd) and Toll signaling cascades under unchallenged conditions. Also appears to be involved in modulating the differential expression of certain antimicrobial peptides (AMP) in response to infection by either Gram-positive or Gram-negative bacteria. Involved in the regulation of DNA damage repair pathways, including euchromatic site-specific double strand break (DSB) repair. This chain is Ubiquitin carboxyl-terminal hydrolase puf, found in Drosophila melanogaster (Fruit fly).